The primary structure comprises 339 residues: Cathepsin B (339 aa).

The first 17 residues, 1-17 (MWWSLIPLSCLLALTSA), serve as a signal peptide directing secretion. The propeptide at 18–79 (HDKPSSHPLS…ERVGFSEDIN (62 aa)) is activation peptide. Intrachain disulfides connect C93–C122, C105–C150, C141–C207, C142–C146, C179–C211, and C187–C198. Residue C108 is part of the active site. The N-linked (GlcNAc...) asparagine glycan is linked to N192. N6-acetyllysine is present on K220. Residues H278 and N298 contribute to the active site. The propeptide occupies 334–339 (QYWGRF).

It belongs to the peptidase C1 family. In terms of assembly, dimer of a heavy chain and a light chain cross-linked by a disulfide bond. Interacts with SRPX2. Directly interacts with SHKBP1. In terms of tissue distribution, expressed in the epithelial cells of the prostate and mammary gland.

It is found in the lysosome. The protein resides in the melanosome. It localises to the secreted. The protein localises to the extracellular space. Its subcellular location is the apical cell membrane. It carries out the reaction Hydrolysis of proteins with broad specificity for peptide bonds. Preferentially cleaves -Arg-Arg-|-Xaa bonds in small molecule substrates (thus differing from cathepsin L). In addition to being an endopeptidase, shows peptidyl-dipeptidase activity, liberating C-terminal dipeptides.. Functionally, thiol protease which is believed to participate in intracellular degradation and turnover of proteins. Cleaves matrix extracellular phosphoglycoprotein MEPE. Involved in the solubilization of cross-linked TG/thyroglobulin in the thyroid follicle lumen. Has also been implicated in tumor invasion and metastasis. This is Cathepsin B (Ctsb) from Rattus norvegicus (Rat).